The sequence spans 1453 residues: Collagen alpha-1(I) chain (1453 aa).

Positions Met-1–Gly-22 are cleaved as a signal peptide. Residues Gln-23–Ser-151 constitute a propeptide, N-terminal propeptide. The VWFC domain maps to Val-29–Pro-87. Asn-56 carries an N-linked (GlcNAc...) asparagine glycan. Positions Val-97–Arg-1206 are disordered. 2 stretches are compositionally biased toward pro residues: residues Pro-109 to Pro-118 and Pro-128 to Pro-143. Gln-152 carries the pyrrolidone carboxylic acid modification. The segment at Gln-152–Pro-167 is nonhelical region (N-terminal). The residue at position 160 (Lys-160) is an Allysine. Phosphoserine is present on Ser-161. Positions Gly-168–Pro-1181 are triple-helical region. Pro-179, Pro-182, Pro-185, Pro-194, Pro-197, Pro-200, Pro-215, Pro-230, Pro-236, Pro-245, and Pro-251 each carry 4-hydroxyproline. Residues Pro-187–Met-206 show a composition bias toward low complexity. Positions Asn-218–Glu-232 are enriched in basic and acidic residues. A 5-hydroxylysine; alternate modification is found at Lys-254. O-linked (Gal...) hydroxylysine; alternate glycosylation occurs at Lys-254. Phosphoserine is present on Ser-260. Pro-278, Pro-281, Pro-287, Pro-296, and Pro-302 each carry 4-hydroxyproline. The span at Ser-307–Ala-320 shows a compositional bias: low complexity. A compositionally biased stretch (pro residues) spans Pro-322–Phe-334. A 4-hydroxyproline mark is found at Pro-323, Pro-332, Pro-335, Pro-362, Pro-365, Pro-377, Pro-383, Pro-392, Pro-398, Pro-401, and Pro-416. Low complexity predominate over residues Pro-335–Glu-361. Low complexity predominate over residues Ala-368–Pro-418. 5-hydroxylysine is present on Lys-419. 4-hydroxyproline is present on residues Pro-425, Pro-428, Pro-440, Pro-449, Pro-464, Pro-470, Pro-479, and Pro-485. Residues Gly-474 to Gly-483 are compositionally biased toward gly residues. Lys-494 is modified (5-hydroxylysine). 4-hydroxyproline is present on residues Pro-503, Pro-512, Pro-518, Pro-524, Pro-533, Pro-536, Pro-545, Pro-554, Pro-560, Pro-572, Pro-581, Pro-590, Pro-593, Pro-611, Pro-629, Pro-635, Pro-641, Pro-647, Pro-653, Pro-659, Pro-671, Pro-680, Pro-692, Pro-704, Pro-707, Pro-713, Pro-719, and Pro-728. The segment covering Lys-527 to Ala-566 has biased composition (low complexity). Positions Gln-623 to Gln-650 are enriched in low complexity. Low complexity-rich tracts occupy residues Pro-685–Asp-695 and Ala-703–Gln-716. The Cell attachment site signature appears at Arg-734 to Asp-736. Position 740 is a 5-hydroxylysine (Lys-740). 3 positions are modified to 4-hydroxyproline: Pro-746, Pro-761, and Pro-767. Residues Thr-773–Ala-787 show a composition bias toward low complexity. Phosphoserine is present on Ser-776. A 4-hydroxyproline mark is found at Pro-788, Pro-794, Pro-797, Pro-806, Pro-812, Pro-830, Pro-839, and Pro-848. Residues Ala-800 to Lys-815 show a composition bias toward low complexity. The segment covering Pro-829–Pro-841 has biased composition (pro residues). Residues Ile-842 to Val-872 show a composition bias toward low complexity. At Lys-851 the chain carries 5-hydroxylysine. Residues Pro-860 and Pro-866 each carry the 4-hydroxyproline modification. At Pro-874 the chain carries 3-hydroxyproline. 4-hydroxyproline occurs at positions 875, 884, 887, 908, 917, 926, 935, 953, 962, 965, 971, 986, 992, 998, 1007, and 1013. Residues Glu-901 to Glu-910 show a composition bias toward low complexity. Over residues Ala-920–Pro-935 the composition is skewed to low complexity. The segment covering Pro-985 to Ala-995 has biased composition (pro residues). Positions Pro-997 to Ser-1012 are enriched in low complexity. Position 1022 is a 5-hydroxylysine (Lys-1022). The segment covering Ala-1031–Val-1046 has biased composition (pro residues). Residues Pro-1034, Pro-1037, and Pro-1040 each carry the 4-hydroxyproline modification. The segment covering Ile-1067 to Pro-1081 has biased composition (low complexity). The short motif at Arg-1082 to Asp-1084 is the Cell attachment site element. The span at Arg-1082–Ile-1096 shows a compositional bias: basic and acidic residues. The residue at position 1085 (Lys-1085) is a 5-hydroxylysine. 5-hydroxylysine; alternate is present on Lys-1097. O-linked (Gal...) hydroxylysine; alternate glycosylation is present at Lys-1097. Residues Phe-1102–Pro-1148 are compositionally biased toward low complexity. 5 positions are modified to 4-hydroxyproline: Pro-1109, Pro-1112, Pro-1115, Pro-1133, and Pro-1148. Pro-1153 is subject to 3-hydroxyproline. The residue at position 1154 (Pro-1154) is a 4-hydroxyproline. Pro residues predominate over residues Ala-1166–Pro-1181. Pro-1168 bears the 3-hydroxyproline mark. Pro-1169 carries the 4-hydroxyproline modification. 3-hydroxyproline is present on Pro-1171. Pro-1172 carries the 4-hydroxyproline modification. Residue Pro-1174 is modified to 3-hydroxyproline. 4-hydroxyproline is present on residues Pro-1175, Pro-1178, and Pro-1181. The major antigenic determinant (of neutral salt-extracted rat skin collagen) stretch occupies residues Gly-1176–Asp-1186. Residues Ser-1182–Ala-1207 form a nonhelical region (C-terminal) region. Residue Lys-1197 is modified to Allysine. The segment covering Lys-1197–Arg-1206 has biased composition (basic and acidic residues). Positions Asp-1208–Val-1453 are cleaved as a propeptide — C-terminal propeptide. The Fibrillar collagen NC1 domain maps to Leu-1218–Val-1453. 3 disulfides stabilise this stretch: Cys-1248–Cys-1280, Cys-1288–Cys-1451, and Cys-1359–Cys-1404. Ca(2+) contacts are provided by Asp-1266, Asn-1268, Gln-1269, Cys-1271, and Asp-1274. Residue Asn-1354 is glycosylated (N-linked (GlcNAc...) asparagine).

The protein belongs to the fibrillar collagen family. In terms of assembly, trimers of one alpha 2(I) and two alpha 1(I) chains. Interacts with MRC2. Interacts with TRAM2. Interacts with MFAP4 in a Ca (2+)-dependent manner. Contains mostly 4-hydroxyproline. Proline residues at the third position of the tripeptide repeating unit (G-X-Y) are hydroxylated in some or all of the chains. Post-translationally, contains 3-hydroxyproline at a few sites. This modification occurs on the first proline residue in the sequence motif Gly-Pro-Hyp, where Hyp is 4-hydroxyproline. In terms of processing, lysine residues at the third position of the tripeptide repeating unit (G-X-Y) are 5-hydroxylated in some or all of the chains. O-glycosylated on hydroxylated lysine residues. The O-linked glycan consists of a Glc-Gal disaccharide. As to expression, forms the fibrils of tendon, ligaments and bones. In bones the fibrils are mineralized with calcium hydroxyapatite.

It localises to the secreted. The protein resides in the extracellular space. The protein localises to the extracellular matrix. Functionally, type I collagen is a member of group I collagen (fibrillar forming collagen). This chain is Collagen alpha-1(I) chain (Col1a1), found in Rattus norvegicus (Rat).